A 549-amino-acid polypeptide reads, in one-letter code: Lipase 5 (549 aa).

Positions 1 to 15 are cleaved as a signal peptide; that stretch reads MKLALALSLIASVAA. The cysteines at positions 75 and 112 are disulfide-linked. The Acyl-ester intermediate role is filled by Ser-224. An intrachain disulfide couples Cys-283 to Cys-292. Residue Asn-329 is glycosylated (N-linked (GlcNAc...) asparagine). Glu-356 functions as the Charge relay system in the catalytic mechanism. A glycan (N-linked (GlcNAc...) asparagine) is linked at Asn-366. The active-site Charge relay system is the His-464.

Belongs to the type-B carboxylesterase/lipase family.

The catalysed reaction is a triacylglycerol + H2O = a diacylglycerol + a fatty acid + H(+). This is Lipase 5 (LIP5) from Diutina rugosa (Yeast).